We begin with the raw amino-acid sequence, 315 residues long: Olfactory receptor 4E1 (315 aa).

The Extracellular segment spans residues Met-1–Ser-33. N-linked (GlcNAc...) asparagine glycosylation is present at Asn-8. The chain crosses the membrane as a helical span at residues Met-34–Ile-54. The Cytoplasmic portion of the chain corresponds to Tyr-55–Thr-61. Residues Pro-62 to Val-82 form a helical membrane-spanning segment. Topologically, residues Pro-83–Cys-101 are extracellular. A disulfide bridge connects residues Cys-101 and Cys-183. A helical transmembrane segment spans residues Val-102–Met-122. Over Ala-123–Lys-143 the chain is Cytoplasmic. The chain crosses the membrane as a helical span at residues Val-144 to Thr-164. The Extracellular segment spans residues Ser-165–Gly-208. Residues Leu-209–Leu-229 form a helical membrane-spanning segment. Topologically, residues Arg-230–Ala-240 are cytoplasmic. A helical membrane pass occupies residues Leu-241–Ile-261. Over Tyr-262–Asp-272 the chain is Extracellular. The helical transmembrane segment at Lys-273–Leu-293 threads the bilayer. Over Arg-294–Lys-315 the chain is Cytoplasmic.

Belongs to the G-protein coupled receptor 1 family.

It localises to the cell membrane. In terms of biological role, odorant receptor. This is Olfactory receptor 4E1 (OR4E1) from Homo sapiens (Human).